The chain runs to 281 residues: Orotidine 5'-phosphate decarboxylase (281 aa).

The active-site Proton donor is the Lys94.

The protein belongs to the OMP decarboxylase family. Type 2 subfamily.

It catalyses the reaction orotidine 5'-phosphate + H(+) = UMP + CO2. Its pathway is pyrimidine metabolism; UMP biosynthesis via de novo pathway; UMP from orotate: step 2/2. The chain is Orotidine 5'-phosphate decarboxylase from Thermomicrobium roseum (strain ATCC 27502 / DSM 5159 / P-2).